The primary structure comprises 156 residues: Transcriptional repressor NrdR (156 aa).

A zinc finger spans residues 3 to 34 (CPYCGETEDKVIDSRQGKEADVIRRRRECLSC). Residues 49–139 (LVIIKKDGRR…VYREFKHVND (91 aa)) form the ATP-cone domain.

Belongs to the NrdR family. Zn(2+) serves as cofactor.

Its function is as follows. Negatively regulates transcription of bacterial ribonucleotide reductase nrd genes and operons by binding to NrdR-boxes. The chain is Transcriptional repressor NrdR from Desulfatibacillum aliphaticivorans.